A 127-amino-acid polypeptide reads, in one-letter code: MDLDLIQDLPILNFPPAIKIRANTNRDDDGGGCTTPTSSDHKIPPTTATTPPPPPQKPRPPSTPSSLGIRSCKRKLMTSLSKYEIIVNKDEIERFFSSVYNQTMASSTTTAITVAKRRRSFRSCSRR.

Residues Arg-21–Ser-71 form a disordered region. Over residues Thr-50–Thr-63 the composition is skewed to pro residues.

Interacts with CDKA-1. Interacts with CYCD2-1, CYCD3-2 and CYCD4-1. Interacts with CDKB1-1. Interacts with CPR5. In terms of tissue distribution, expressed in the shoot apical meristem, leaf primordia and the elongation zone of the root.

The protein resides in the nucleus. Its function is as follows. Cyclin-dependent protein kinase (CDK) inhibitor that functions as a repressor of mitosis in the endoreduplication cell cycle. Inhibits the kinase activity of CYCD3-1/CDKA-1, CYCD2-1/CDKA-1 and CYCB1-1/CDKB1-1 complexes in a dose dependent manner. Cooperates with SMR1 and SMR2 to promote endoreplication during leaf development. Required for normal trichome endoreplicating cell cycles. Positive regulator of effector-triggered immunity (ETI). The polypeptide is Cyclin-dependent protein kinase inhibitor SIM (Arabidopsis thaliana (Mouse-ear cress)).